We begin with the raw amino-acid sequence, 805 residues long: Replication restart protein PriA (805 aa).

Residues 1 to 110 (MNFAEVIVDV…QAMLPAALKA (110 aa)) form a 3'BD region. The tract at residues 111-166 (KYEKELKIAHGADLPPQVERLFSETKTLLYSDIPDHETLKLIQRHVQKGDIDVTYK) is linker. Residues 167–253 (VAQKTNKKMV…KESYEEVYRD (87 aa)) form a WH region. One can recognise a Helicase ATP-binding domain in the interval 282–448 (TLDSDEHKVF…QKGVYELLSL (167 aa)). 295 to 302 (GVTGSGKT) is an ATP binding site. Positions 391 to 394 (DEEH) match the DEAH box motif. The Zn(2+) site is built by cysteine 510, cysteine 513, cysteine 519, cysteine 522, cysteine 537, cysteine 540, cysteine 550, and cysteine 553. The 155-residue stretch at 545 to 699 (PVPHTCPECA…TFYQHEMAHR (155 aa)) folds into the Helicase C-terminal domain.

It belongs to the helicase family. PriA subfamily. As to quaternary structure, monomer. Component of the replication restart primosome which assembles in this order; PriA, DnaD then DnaB. The preferred DNA substrate mimics an arrested DNA replication fork with unreplicated lagging strand. Interacts with DnaD but not DnaB. Interacts with SSB (sbbA) via the latter's 35 residue C-terminal tail which tethers PriA to ssDNA. Colocalizes with DNA pol III subunit gamma/tau (dnaX). May interact with RarA. Requires Zn(2+) as cofactor.

It is found in the cytoplasm. The protein localises to the nucleoid. It catalyses the reaction Couples ATP hydrolysis with the unwinding of duplex DNA by translocating in the 3'-5' direction.. It carries out the reaction ATP + H2O = ADP + phosphate + H(+). In terms of biological role, initiates the restart of stalled replication forks, which reloads the replicative helicase on sites other than the origin of replication. Recognizes and binds to abandoned replication forks and remodels them to uncover a helicase loading site. Promotes assembly of the primosome at these replication forks. Serves as the initiating protein for assembly of the replication restart primosome; binding of PriA to an arrested DNA replication fork with unreplicated lagging strand triggers assembly. Sequentially DnaD (possibly as a dimer) and DnaB homotetramers bind. Assembly probably continues by loading of the DnaC replicative helicase aided by helicase loader DnaI. A single-strand (ss)DNA-dependent ATPase with helicase activity. Recognizes and binds the arrested nascent DNA chain at stalled replication forks. Binds forked DNA substrates and makes a larger complex with RarA; RarA has no effect on the helicase function. Binds ssDNA, D-loops and replication fork-like substrates but not double-stranded (ds)DNA; the preferred DNA substrate mimics an arrested DNA replication fork with an unreplicated lagging strand. Recognizes nicked dsDNA. A supershift on ssDNA occurs in the presence of single-stranded binding protein (SSB). Cannot substitute for E.coli PriA. Required for replication of plasmids that have a rolling circle mechanism, which produces circular single-stranded (ss)DNA intermediates corresponding to the lagging strand template, which are then converted into double-stranded (ds)DNA; priA is required to activate the conversion of ssDNA into dsDNA. This is Replication restart protein PriA from Bacillus subtilis (strain 168).